We begin with the raw amino-acid sequence, 150 residues long: Protein-export protein SecB (150 aa).

This sequence belongs to the SecB family. In terms of assembly, homotetramer, a dimer of dimers. One homotetramer interacts with 1 SecA dimer.

Its subcellular location is the cytoplasm. One of the proteins required for the normal export of preproteins out of the cell cytoplasm. It is a molecular chaperone that binds to a subset of precursor proteins, maintaining them in a translocation-competent state. It also specifically binds to its receptor SecA. The protein is Protein-export protein SecB of Acidovorax ebreus (strain TPSY) (Diaphorobacter sp. (strain TPSY)).